Here is a 361-residue protein sequence, read N- to C-terminus: Alanine racemase (361 aa).

Lys-34 (proton acceptor; specific for D-alanine) is an active-site residue. N6-(pyridoxal phosphate)lysine is present on Lys-34. A substrate-binding site is contributed by Arg-129. Catalysis depends on Tyr-256, which acts as the Proton acceptor; specific for L-alanine. Position 304 (Met-304) interacts with substrate.

The protein belongs to the alanine racemase family. Homodimer. Requires pyridoxal 5'-phosphate as cofactor.

It catalyses the reaction L-alanine = D-alanine. The protein operates within amino-acid biosynthesis; D-alanine biosynthesis; D-alanine from L-alanine: step 1/1. Its function is as follows. Catalyzes the interconversion of L-alanine and D-alanine. May also act on other amino acids. The chain is Alanine racemase (alr) from Corynebacterium glutamicum (strain ATCC 13032 / DSM 20300 / JCM 1318 / BCRC 11384 / CCUG 27702 / LMG 3730 / NBRC 12168 / NCIMB 10025 / NRRL B-2784 / 534).